Reading from the N-terminus, the 248-residue chain is Protein canopy homolog 4 (248 aa).

A signal peptide spans 1–21 (MGPVRLGILLFLFLAVHEAWA). Disulfide bonds link Cys38–Cys196, Cys41–Cys184, and Cys94–Cys156. The tract at residues 200–248 (TWTGKEITDGEEKTEGEEEQEEEEEEEEEEGGDKMTKTGSHPKLDREDL) is disordered. Residues 213–230 (TEGEEEQEEEEEEEEEEG) are compositionally biased toward acidic residues. Over residues 231–248 (GDKMTKTGSHPKLDREDL) the composition is skewed to basic and acidic residues.

This sequence belongs to the canopy family. In terms of assembly, interacts with TLR4.

It localises to the secreted. Plays a role in the regulation of the cell surface expression of TLR4. The sequence is that of Protein canopy homolog 4 (CNPY4) from Homo sapiens (Human).